The chain runs to 105 residues: Mini zinc finger protein 1 (105 aa).

Positions 1–29 (MGPQQDRSAAKPYANGSTAAAAAAGRKEN) are disordered. The segment at 35–84 (YRECQRNHAASIGGHAVDGCREFMASGAEGTAAALLCAACGCHRSFHRRE) adopts a ZF-HD dimerization-type; degenerate zinc-finger fold.

As to quaternary structure, homo- and heterodimers.

It is found in the cytoplasm. Functionally, inhibits zinc finger homeodomain (ZHD) transcription factors, by interacting with them to prevent both their nuclear localization and their DNA-binding properties. This Oryza sativa subsp. indica (Rice) protein is Mini zinc finger protein 1 (MIF1).